The chain runs to 1710 residues: Latrophilin Cirl (1710 aa).

The Extracellular portion of the chain corresponds to 1-767; sequence MLPTILSISY…LFTMFDGNMR (767 aa). In terms of domain architecture, SUEL-type lectin spans 25-114; sequence ACEGKKLTIE…KYLEAHYQCI (90 aa). An N-linked (GlcNAc...) asparagine glycan is attached at Asn142. Residues 183–304 are disordered; sequence QHTAVTHSTP…SGSVVPGNGS (122 aa). Composition is skewed to polar residues over residues 185–198 and 256–265; these read TAVT…STTA and NATSPSNTRI. N-linked (GlcNAc...) asparagine glycosylation is present at Asn256. 2 stretches are compositionally biased toward low complexity: residues 275 to 285 and 295 to 304; these read DDGTLLTTKSS and SGSVVPGNGS. Residues Asn302 and Asn341 are each glycosylated (N-linked (GlcNAc...) asparagine). A disordered region spans residues 376–400; that stretch reads YDEYDDDPSSTTPATSSADCLHNSS. Positions 384 to 394 are enriched in low complexity; sequence SSTTPATSSAD. N-linked (GlcNAc...) asparagine glycosylation is found at Asn398, Asn655, Asn703, and Asn730. A GAIN-B domain is found at 561–754; sequence RSVVQKVKNI…AILMDVVDEH (194 aa). Intrachain disulfides connect Cys709–Cys736 and Cys724–Cys738. A GPS region spans residues 709–754; it reads CVFWNYIDHAWSANGCSLESTNRTHSVCSCNHLTNFAILMDVVDEH. Residues 768–788 traverse the membrane as a helical segment; the sequence is IFIYISIGICVVFIVIALLTL. At 789–801 the chain is on the cytoplasmic side; that stretch reads KLFNGVFVKSART. A helical membrane pass occupies residues 802–822; it reads SIYTSIYLCLLAIELLFLLGI. The Extracellular portion of the chain corresponds to 823–828; the sequence is EQTETS. A helical membrane pass occupies residues 829-849; the sequence is IFCGFITIFLHCAILSGTAWF. At 850–875 the chain is on the cytoplasmic side; it reads CYEAFHSYSTLTSDELLLEVDQTPKV. A helical transmembrane segment spans residues 876–896; it reads NCYYLLSYGLSLSVVAISLVI. Residues 897-920 lie on the Extracellular side of the membrane; sequence DPSTYTQNDYCVLMEANALFYATF. A helical transmembrane segment spans residues 921-941; it reads VMPVLVFFVAAIGYTFLSWII. Over 942–968 the chain is Cytoplasmic; sequence MCRKSRTGLKTKEHTRLASVRFDIRCS. The helical transmembrane segment at 969–989 threads the bilayer; the sequence is FVFLLLLSAVWCSAYFYLRGA. The Extracellular segment spans residues 990 to 999; the sequence is KMDDDTADVY. Residues 1000 to 1020 form a helical membrane-spanning segment; that stretch reads GYCFICFNTLLGLYIFVFHCI. The Cytoplasmic portion of the chain corresponds to 1021–1710; it reads QNEKIRREYR…VRCYLEPLAK (690 aa). Phosphoserine occurs at positions 1156, 1253, 1260, 1329, and 1330. Positions 1234–1259 are disordered; it reads KPNSGQHGKKKRGAGGVPASPSGSLH. Disordered stretches follow at residues 1452–1540 and 1568–1690; these read GGGS…SDER and DYGA…QQRH. Low complexity predominate over residues 1458–1483; it reads GGSVSSRSQQQQLKKQQQQQSLAQQR. Acidic residues-rich tracts occupy residues 1491–1505 and 1515–1528; these read DDDD…EEAT and CDED…DLED. Residues 1638–1650 are compositionally biased toward polar residues; sequence QTPAQKRQQLQKL. A compositionally biased stretch (low complexity) spans 1651-1672; it reads SPQSTTSSSSHTSHSNPNPHPH. A compositionally biased stretch (basic residues) spans 1673–1689; the sequence is QLTHPHPHQHPPHHQQR.

Belongs to the G-protein coupled receptor 2 family. LN-TM7 subfamily. As to quaternary structure, forms a heterodimer, consisting of a large extracellular region non-covalently linked to a seven-transmembrane moiety. Proteolytically cleaved into 2 subunits, an extracellular subunit and a seven-transmembrane subunit.

Its subcellular location is the cell membrane. The protein is Latrophilin Cirl of Drosophila erecta (Fruit fly).